A 439-amino-acid chain; its full sequence is MLSSILLTIFCAFLSSTGAANVADWNSLNKTLKGQLKGATPLASPCFSQVNAYEETQSEDCATAIGQQCLLDSSDPSSIKAYANVSCNQGSVPSYYIQVKSAEEVKKAFAFAARTQTAISIKNSGHDYNGRSSGAGSLSLWTRKLQELKYEPSFVPQQCGRQAGVAAITTGAGINFDQVYTFAHEKGVTYLGGSGPTVGASGGWVMTGGHGVLSRVYGLGVDRVLEFEVVTTDGVTRIANACQNQDLFWALRGGGGGTFGVILSTTTRVEPKLSIAVAFIALPANTSQQVLAEWTSLAINSTIKWAADGWGGFQGSGITLLGTPLLSLAQAESSMAELAQFAKRNGGSVAVELLSDFYDMYTKYYITNVQAGGSALFSHNWMIPSRAYANAQGRKQLQDHMDWMSSVGLNPGFLATTPYVYSGVAKQCGTFDAFGWMGL.

Residues 1–19 form the signal peptide; sequence MLSSILLTIFCAFLSSTGA. N-linked (GlcNAc...) asparagine glycosylation is found at Asn-29 and Asn-84. One can recognise an FAD-binding PCMH-type domain in the interval 89 to 272; sequence QGSVPSYYIQ…LSTTTRVEPK (184 aa). Residues Asn-285 and Asn-300 are each glycosylated (N-linked (GlcNAc...) asparagine).

The protein belongs to the oxygen-dependent FAD-linked oxidoreductase family. The cofactor is FAD.

Its pathway is mycotoxin biosynthesis. FAD-linked oxidoreductase; part of the gene cluster that mediates the biosynthesis of the mycotoxins phomacins, leucine-derived cytochalasans with potent actin polymerization-inhibitory activities and monocot-specific antigerminative activities. The first step in the pathway is catalyzed by the hybrid PKS-NRPS phmA, assisted by the enoyl reductase phmE, that are responsible for fusion of the leucine precursor and the polyketide backbone to produce a 2-pyrrolidone intermediate. The polyketide synthase module (PKS) of phmA is responsible for the synthesis of the polyketide backbone and the downstream nonribosomal peptide synthetase (NRPS) amidates the carboxyl end of the polyketide with the leucine precursor. Because phmA lacks a designated enoylreductase (ER) domain, the required activity is provided the enoyl reductase phmE. Reduction by the hydrolyase phmG, followed by dehydration and intra-molecular Diels-Alder cyclization by the Diels-Alderase phmD then yield the required isoindolone-fused macrocycle. A number of oxidative steps catalyzed by the tailoring cytochrome P450 monooxygenase phmB, the FAD-linked oxidoreductase phmC and the short-chain dehydrogenase/reductase phmF, are further required to afford the final products, phomacin D and phomacin E. The polypeptide is FAD-linked oxidoreductase phmC (Phaeosphaeria nodorum (strain SN15 / ATCC MYA-4574 / FGSC 10173) (Glume blotch fungus)).